A 675-amino-acid chain; its full sequence is Heat shock 70 kDa protein, mitochondrial (675 aa).

The transit peptide at 1–51 (MAAVLRSLRRRDVASATFSAYRSLTGSTKPAYVAQKWSCLARPFSSRPAGN) directs the protein to the mitochondrion. The tract at residues 638 to 675 (VSKIGEHMSGGSSGGSSAGGSQGGGDQAPEAEYEEVKK) is disordered. Gly residues predominate over residues 648-663 (GSSGGSSAGGSQGGGD). Over residues 666–675 (PEAEYEEVKK) the composition is skewed to acidic residues.

It belongs to the heat shock protein 70 family.

It is found in the mitochondrion. The chain is Heat shock 70 kDa protein, mitochondrial from Phaseolus vulgaris (Kidney bean).